Consider the following 301-residue polypeptide: MPTYALLGATGATGSAILRCLLASPPPDLDLNILVRSKQKLLKSFPTLTTTISPRIHIIQGNSTDTIALQQCLEDASVAFMCVADNASNKGVSLTADTVTAIVTTLGMLRKLHGSAYNAPTILQLRSASLNPKLSCQVPRLVYNIVSFCLHYSHLDIVKACEHYEAAAAKGLLSYIYVDPPTIHDAFGPNRTGHKLISCKPDVCDKQETALSYADLGAGFVEIASRKEDFLNQPVGVTATGKAKETWGVLAGFLFDGAKGRARAWWEEERPMSKPQNLFLYCVMVSLAAVVLVQYTGTMNR.

A signal peptide spans 1–23; the sequence is MPTYALLGATGATGSAILRCLLA. 3 N-linked (GlcNAc...) asparagine glycosylation sites follow: asparagine 62, asparagine 86, and asparagine 190.

The protein belongs to the avfA family.

Its pathway is mycotoxin biosynthesis. Averufin oxidase A; part of the fragmented gene cluster that mediates the biosynthesis of dothistromin (DOTH), a polyketide toxin very similar in structure to the aflatoxin precursor, versicolorin B. The first step of the pathway is the conversion of acetate to norsolorinic acid (NOR) and requires the fatty acid synthase subunits hexA and hexB, as well as the polyketide synthase pksA. PksA combines a hexanoyl starter unit and 7 malonyl-CoA extender units to synthesize the precursor NOR. The hexanoyl starter unit is provided to the acyl-carrier protein (ACP) domain by the fungal fatty acid synthase hexA/hexB. The second step is the conversion of NOR to averantin (AVN) and requires the norsolorinic acid ketoreductase nor1, which catalyzes the dehydration of norsolorinic acid to form (1'S)-averantin. The cytochrome P450 monooxygenase avnA then catalyzes the hydroxylation of AVN to 5'hydroxyaverantin (HAVN). The next step is performed by adhA that transforms HAVN to averufin (AVF). Averufin might then be converted to hydroxyversicolorone by cypX and avfA. Hydroxyversicolorone is further converted versiconal hemiacetal acetate (VHA) by moxY. VHA is then the substrate for the versiconal hemiacetal acetate esterase est1 to yield versiconal (VAL). Versicolorin B synthase vbsA then converts VAL to versicolorin B (VERB) by closing the bisfuran ring. Then, the activity of the versicolorin B desaturase verB leads to versicolorin A (VERA). DotB, a predicted chloroperoxidase, may perform epoxidation of the A-ring of VERA. Alternatively, a cytochrome P450, such as cypX or avnA could catalyze this step. It is also possible that another, uncharacterized, cytochrome P450 enzyme is responsible for this step. Opening of the epoxide could potentially be achieved by the epoxide hydrolase epoA. However, epoA seems not to be required for DOTH biosynthesis, but other epoxide hydrolases may have the ability to complement this hydrolysis. Alternatively, opening of the epoxide ring could be achieved non-enzymatically. The next step is the deoxygenation of ring A to yield the 5,8-dihydroxyanthraquinone which is most likely catalyzed by the NADPH dehydrogenase encoded by ver1. The last stages of DOTH biosynthesis are proposed to involve hydroxylation of the bisfuran. OrdB and norB might have oxidative roles here. An alternative possibility is that cytochrome P450 monoogenases such as avnA and cypX might perform these steps in addition to previously proposed steps. The protein is Averufin oxidase A of Dothistroma septosporum (Red band needle blight fungus).